Here is a 690-residue protein sequence, read N- to C-terminus: Copper-exporting P-type ATPase B (690 aa).

The Cytoplasmic portion of the chain corresponds to 1 to 64; the sequence is MHEHDSHGEA…MEDFKKRFYV (64 aa). Residues 23-46 are disordered; that stretch reads QHHEHHGHEEEHSAHHEKMKHSAD. The segment covering 28-46 has biased composition (basic and acidic residues); sequence HGHEEEHSAHHEKMKHSAD. Residues 65 to 85 form a helical membrane-spanning segment; sequence STLLTIPILILSPAIQTFLGF. Residues 86 to 91 are Extracellular-facing; it reads RVEFAG. Residues 92–112 form a helical membrane-spanning segment; sequence SLYILFLLSSAVYFYGGYPFL. Over 113-127 the chain is Cytoplasmic; it reads KGIFDELRRRQPGMM. The chain crosses the membrane as a helical span at residues 128–148; the sequence is TLIAVAISVAYFYSSAVVFGL. Over 149-151 the chain is Extracellular; the sequence is KGK. A helical transmembrane segment spans residues 152–172; sequence FFFWELATLIDIMLLGHYIEM. The Cytoplasmic portion of the chain corresponds to 173–303; it reads RSVLGASRAL…KSRTQDLANR (131 aa). The helical transmembrane segment at 304-324 threads the bilayer; it reads AALLLTVIALTVGSVTLAIWL. Topologically, residues 325–336 are extracellular; it reads AYIADFAFAIER. The chain crosses the membrane as a helical span at residues 337–357; sequence AVTVMVITCPHALGLAIPLVV. Residues 358 to 640 lie on the Cytoplasmic side of the membrane; it reads AVSTSLAAKS…RKTYSKMKQN (283 aa). Asp-389 serves as the catalytic 4-aspartylphosphate intermediate. Residues 390–391, 537–538, and Lys-565 each bind phosphate; these read KT and TG. Mg(2+)-binding residues include Asp-583 and Asp-587. Residues 641–661 form a helical membrane-spanning segment; sequence LLWATGYNAFAIPLAAGVLYS. Residues 662-663 are Extracellular-facing; the sequence is AG. A helical membrane pass occupies residues 664 to 684; the sequence is ILLSPAVGAILMSLSTVIVAI. Residues 685–690 are Cytoplasmic-facing; that stretch reads NARLLR.

The protein belongs to the cation transport ATPase (P-type) (TC 3.A.3) family. Type IB subfamily.

The protein localises to the cell membrane. It carries out the reaction Cu(2+)(in) + ATP + H2O = Cu(2+)(out) + ADP + phosphate + H(+). Activated by Cu(2+) and to a lesser extent by Ag(+) and Cu(+). Its function is as follows. Involved in copper export. The chain is Copper-exporting P-type ATPase B (copB) from Archaeoglobus fulgidus (strain ATCC 49558 / DSM 4304 / JCM 9628 / NBRC 100126 / VC-16).